The chain runs to 162 residues: Calcium-binding protein 4b (162 aa).

4 EF-hand domains span residues 10–45 (ELTNATNEAIKAADKNGDNQLSKKEVNDMYKKCKYP), 46–81 (NPTLATNSLFELFDLDKDGKLSVNEVKTAVLVDYII), 85–120 (TCLKKFVDIIFKADSNKDNKITWDEARQYFITSGSN), and 123–158 (QAKVLANSMFEDVDSDDDKCITREELREYAIEYFEI). Ca(2+) is bound by residues Asp-23, Asn-25, Asp-27, Gln-29, Glu-34, Asp-59, Asp-61, Asp-63, Lys-65, and Glu-70. Residues Asp-136, Asp-138, Asp-140, Cys-142, and Glu-147 each coordinate Ca(2+).

The sequence is that of Calcium-binding protein 4b (cbpD2) from Dictyostelium discoideum (Social amoeba).